The chain runs to 206 residues: GTP cyclohydrolase 1 (206 aa).

Positions 95, 98, and 166 each coordinate Zn(2+).

It belongs to the GTP cyclohydrolase I family. Toroid-shaped homodecamer, composed of two pentamers of five dimers.

It catalyses the reaction GTP + H2O = 7,8-dihydroneopterin 3'-triphosphate + formate + H(+). Its pathway is cofactor biosynthesis; 7,8-dihydroneopterin triphosphate biosynthesis; 7,8-dihydroneopterin triphosphate from GTP: step 1/1. The protein is GTP cyclohydrolase 1 of Bartonella henselae (strain ATCC 49882 / DSM 28221 / CCUG 30454 / Houston 1) (Rochalimaea henselae).